A 171-amino-acid polypeptide reads, in one-letter code: uncharacterized protein (171 aa).

The disordered stretch occupies residues 56–83 (TVGVNKNAKNGPTQSQTRSGSAGAQARM). The segment covering 57 to 77 (VGVNKNAKNGPTQSQTRSGSA) has biased composition (polar residues). In terms of domain architecture, J spans 113 to 170 (KAFETLGLGASATTADIKAAYKDLVKKHHPDANGGDRGSEERFRAVIQAYQLLKQAGF).

This is an uncharacterized protein from Sinorhizobium sp.